The sequence spans 461 residues: ATP-dependent protease ATPase subunit HslU (461 aa).

ATP-binding positions include isoleucine 18 and 60–65; that span reads GVGKTE. Residues 157–178 form a disordered region; the sequence is EGSSVKPEPTAQQKESRQKMRK. Aspartate 273, glutamate 339, and arginine 411 together coordinate ATP.

Belongs to the ClpX chaperone family. HslU subfamily. As to quaternary structure, a double ring-shaped homohexamer of HslV is capped on each side by a ring-shaped HslU homohexamer. The assembly of the HslU/HslV complex is dependent on binding of ATP.

The protein localises to the cytoplasm. Its function is as follows. ATPase subunit of a proteasome-like degradation complex; this subunit has chaperone activity. The binding of ATP and its subsequent hydrolysis by HslU are essential for unfolding of protein substrates subsequently hydrolyzed by HslV. HslU recognizes the N-terminal part of its protein substrates and unfolds these before they are guided to HslV for hydrolysis. This chain is ATP-dependent protease ATPase subunit HslU, found in Magnetococcus marinus (strain ATCC BAA-1437 / JCM 17883 / MC-1).